A 209-amino-acid polypeptide reads, in one-letter code: Cilia- and flagella-associated protein 418 (209 aa).

Residues 1-76 (MAKDLDELLD…LINEIFEEPD (76 aa)) are required for interaction with FAM161A. The disordered stretch occupies residues 24–58 (LDLGERPKGDGGGGSHSGDRNGAQEKETLRSTETF). The span at 40-58 (SGDRNGAQEKETLRSTETF) shows a compositional bias: basic and acidic residues.

As to quaternary structure, interacts (via N-terminus) with FAM161A (via central region); the interaction is direct. As to expression, expressed in multiple tissues, including the brain, kidney, lung, spleen, heart, trachea and testis. Expressed in the retina (at protein level).

Its subcellular location is the cytoplasm. The protein resides in the photoreceptor inner segment. Functionally, may be involved in photoreceptor outer segment disk morphogenesis. In Mus musculus (Mouse), this protein is Cilia- and flagella-associated protein 418.